The chain runs to 401 residues: Probable thioesterase FGSG_00047 (401 aa).

The interval 379–401 (AREMDQRKRQKDFTHTTIHDKNS) is disordered.

Belongs to the AMT4 thioesterase family.

It participates in mycotoxin biosynthesis. Functionally, probable thioesterase; part of the gene cluster that mediates the biosynthesis of gramillins A and B, bicyclic lipopeptides that induce cell death in maize leaves but not in wheat leaves. The nonribosomal peptide synthetase GRA1 incorporates respectively a glutamic adic (Glu), a leucine (Leu), a serine (Ser), a hydroxyglutamine (HOGln), a 2-amino decanoic acid, and 2 cysteins (CysB and CysA). The biosynthesis of 2-amino decanoic acid incorporated in gramillins could be initiated by a fatty acid synthase composed of the alpha and beta subunits FGSG_00036 and FGSG_11656. The cytochrome P450 monooxygenase FGSG_15680 could hydroxylate the fatty acid chain. Subsequent oxidation to the ketone by the oxidoreductase FGSG_00048 and transamination by aminotransferase FGSG_00049 could form 2-amino-decanoic acid. On the other hand, FGSG_15680 could also be responsible for the HO-modified glutamine at the gamma-position. Whether hydroxylation occurs on the fully assembled product or on the Gln residue prior to assembly into the gramillins requires further proof. The thioredoxin FGSG_00043 could also be required for the disulfide-bond formation between CysA and CysB. The specific involvement of the remaining proteins from the cluster is more difficult to discern, but could have broader regulatory (FGSG_00040 and FGSG_11657) or enzymatic functions (FGSG_00044 and FGSG_00045). The final C-domain of GRA1 does not possess the expected sequence of a termination CT domain, often implicated in macrocyclization and release of a cyclopeptidein fungal NRPs; and the thioesterase FGSG_00047 may act in concert with the terminal C-domain of GRA1 to catalyze the formation of the macrocyclic anhydride and release of the products. The sequence is that of Probable thioesterase FGSG_00047 from Gibberella zeae (strain ATCC MYA-4620 / CBS 123657 / FGSC 9075 / NRRL 31084 / PH-1) (Wheat head blight fungus).